Reading from the N-terminus, the 454-residue chain is Protein phosphatase methylesterase 1 (454 aa).

2 disordered regions span residues 1 to 69 (MSEL…TGTV) and 181 to 203 (TTVT…APPP). Positions 44-69 (AGPSPGGFPFDDDSSSASSVSSTGTV) are enriched in low complexity. Catalysis depends on residues Ser-240, Asp-266, and His-412.

The protein belongs to the AB hydrolase superfamily.

The catalysed reaction is [phosphatase 2A protein]-C-terminal L-leucine methyl ester + H2O = [phosphatase 2A protein]-C-terminal L-leucine + methanol + H(+). Its function is as follows. Demethylates proteins that have been reversibly carboxymethylated. Demethylates the phosphatase PP2A catalytic subunit. This chain is Protein phosphatase methylesterase 1 (pme-1), found in Neurospora crassa (strain ATCC 24698 / 74-OR23-1A / CBS 708.71 / DSM 1257 / FGSC 987).